The sequence spans 1021 residues: Ephrin type-B receptor 6 (1021 aa).

Positions 1-31 are cleaved as a signal peptide; sequence MATEGAAQLGNRVAGMVCSLWVLLLVSSVLA. The Extracellular portion of the chain corresponds to 32 to 594; it reads LEEVLLDTTG…LSSQLPERLS (563 aa). One can recognise an Eph LBD domain in the interval 33-237; the sequence is EEVLLDTTGE…FSYTCPAVLR (205 aa). The segment at 163 to 182 is disordered; the sequence is SFPSSSSSSSSSSSAAWAVG. The span at 166-176 shows a compositional bias: low complexity; that stretch reads SSSSSSSSSSS. 2 Fibronectin type-III domains span residues 369 to 486 and 487 to 582; these read PPSA…TSHE and VPSA…TLPQ. N-linked (GlcNAc...) asparagine glycosylation occurs at Asn480. A helical membrane pass occupies residues 595 to 615; that stretch reads LVIGSILGALAFLLLAAITVL. Topologically, residues 616 to 1021 are cytoplasmic; the sequence is AVVFQRKRRG…HLRQQGSVEV (406 aa). The region spanning 670 to 919 is the Protein kinase domain; that stretch reads IKIEEVIGTG…QLVAAFDKMI (250 aa). 676-684 contributes to the ATP binding site; that stretch reads IGTGSFGEV. Residues 948–1012 form the SAM domain; sequence PCLDSPQAWL…LHHIQLLQQH (65 aa). The PDZ-binding motif lies at 1019-1021; that stretch reads VEV.

It belongs to the protein kinase superfamily. Tyr protein kinase family. Ephrin receptor subfamily. As to quaternary structure, interacts with CBL and EPHB1. Interacts with FYN; this interaction takes place in a ligand-independent manner. Ligand-binding increases phosphorylation on tyrosine residues. Phosphorylation on tyrosine residues is mediated by transphosphorylation by the catalytically active EPHB1 in a ligand-independent manner. Tyrosine phosphorylation of the receptor may act as a switch on the functional transition from cell adhesion/attraction to de-adhesion/repulsion. Expressed in brain. Expressed in non invasive breast carcinoma cell lines (at protein level). Strong expression in brain and pancreas, and weak expression in other tissues, such as heart, placenta, lung, liver, skeletal muscle and kidney. Expressed in breast non invasive tumors but not in metastatic lesions. Isoform 3 is expressed in cell lines of glioblastomas, anaplastic astrocytomas, gliosarcomas and astrocytomas. Isoform 3 is not detected in normal tissues.

The protein resides in the membrane. The protein localises to the secreted. Kinase-defective receptor for members of the ephrin-B family. Binds to ephrin-B1 and ephrin-B2. Modulates cell adhesion and migration by exerting both positive and negative effects upon stimulation with ephrin-B2. Inhibits JNK activation, T-cell receptor-induced IL-2 secretion and CD25 expression upon stimulation with ephrin-B2. In Homo sapiens (Human), this protein is Ephrin type-B receptor 6 (EPHB6).